Here is a 359-residue protein sequence, read N- to C-terminus: DNA integrity scanning protein DisA (359 aa).

Residues 7–146 (DDIFRATLAA…GRRYVLDGSA (140 aa)) enclose the DAC domain. Residues Gly74, Leu92, and 105 to 109 (TRHRT) contribute to the ATP site.

This sequence belongs to the DisA family. As to quaternary structure, homooctamer. Requires Mg(2+) as cofactor.

It catalyses the reaction 2 ATP = 3',3'-c-di-AMP + 2 diphosphate. Functionally, participates in a DNA-damage check-point that is active prior to asymmetric division when DNA is damaged. DisA forms globular foci that rapidly scan along the chromosomes during sporulation, searching for lesions. When a lesion is present, DisA pauses at the lesion site. This triggers a cellular response that culminates in a temporary block in sporulation initiation. Its function is as follows. Also has diadenylate cyclase activity, catalyzing the condensation of 2 ATP molecules into cyclic di-AMP (c-di-AMP). c-di-AMP acts as a signaling molecule that couples DNA integrity with progression of sporulation. The rise in c-di-AMP level generated by DisA while scanning the chromosome, operates as a positive signal that advances sporulation; upon encountering a lesion, the DisA focus arrests at the damaged site and halts c-di-AMP synthesis. In Frankia casuarinae (strain DSM 45818 / CECT 9043 / HFP020203 / CcI3), this protein is DNA integrity scanning protein DisA.